We begin with the raw amino-acid sequence, 247 residues long: tRNA pseudouridine synthase A (247 aa).

Asp52 (nucleophile) is an active-site residue. Tyr113 is a substrate binding site.

This sequence belongs to the tRNA pseudouridine synthase TruA family. In terms of assembly, homodimer.

The enzyme catalyses uridine(38/39/40) in tRNA = pseudouridine(38/39/40) in tRNA. Formation of pseudouridine at positions 38, 39 and 40 in the anticodon stem and loop of transfer RNAs. The sequence is that of tRNA pseudouridine synthase A from Rhizobium meliloti (strain 1021) (Ensifer meliloti).